Consider the following 116-residue polypeptide: Large ribosomal subunit protein bL17 (116 aa).

Belongs to the bacterial ribosomal protein bL17 family. As to quaternary structure, part of the 50S ribosomal subunit. Contacts protein L32.

The polypeptide is Large ribosomal subunit protein bL17 (Synechococcus sp. (strain CC9902)).